Consider the following 154-residue polypeptide: Egg-lysin (154 aa).

Residues 1 to 18 (MKLLVLWVFAMMATVAMS) form the signal peptide.

Monomer. Homodimer. Molecules associate into dimers and then rapidly dissociate again. Interacts (as a monomer) with the egg vitelline layer protein VERL (via VERL repeats); each VERL chain can bind multiple copies of lysin. Sperm.

It is found in the cytoplasmic vesicle. The protein localises to the secretory vesicle. The protein resides in the acrosome lumen. In terms of biological role, creates a 3 um hole in the egg vitelline layer through which the sperm passes. Does not have enzyme activity. Species-specific interaction between the sperm protein lysin and the egg protein VERL exposes a basic surface on lysin that may dissociate the egg vitelline layer via electrostatic repulsion. Plays a role in ensuring species-specific fertilization. This chain is Egg-lysin, found in Haliotis fulgens (Green abalone).